Here is a 678-residue protein sequence, read N- to C-terminus: UvrABC system protein C (678 aa).

Positions 16–95 constitute a GIY-YIG domain; it reads VEPGVYRFRD…IKEFDPRFNI (80 aa). A UVR domain is found at 208-243; that stretch reads DRLIREMEQQMTAAAEDLDFERAARLRDNIGAMRRA. Low complexity predominate over residues 649-667; the sequence is EAPPEPGAEAPPDSGAAAA. Residues 649-678 form a disordered region; sequence EAPPEPGAEAPPDSGAAAAVMGNDQSRVPG.

Belongs to the UvrC family. Interacts with UvrB in an incision complex.

The protein resides in the cytoplasm. Its function is as follows. The UvrABC repair system catalyzes the recognition and processing of DNA lesions. UvrC both incises the 5' and 3' sides of the lesion. The N-terminal half is responsible for the 3' incision and the C-terminal half is responsible for the 5' incision. The sequence is that of UvrABC system protein C from Mycolicibacterium gilvum (strain PYR-GCK) (Mycobacterium gilvum (strain PYR-GCK)).